Here is a 239-residue protein sequence, read N- to C-terminus: MGHKVNPVGMRLQINRTWDSRWYADTKDYGDLLLEDIKIREFIKEECKQAGVARVIIERPHKKCRVTIHTARPGVIIGKKGADIEVLRKKIASMTDSELHLNIVEVRKPELDAQLVGESIAQQLERRVSFRRAMKRAVQNAMRMGALGIRVNVAGRLGGAEIARTEWYREGRVPLHTLRADIDYAHSEASTPYGIIGIKVWIFKGEIMEHDPQARDRKAQELQDGPAPRGAGGNRRGDR.

Residues 39–107 (IREFIKEECK…ELHLNIVEVR (69 aa)) form the KH type-2 domain. Basic and acidic residues predominate over residues 212 to 221 (PQARDRKAQE). Residues 212 to 239 (PQARDRKAQELQDGPAPRGAGGNRRGDR) form a disordered region. Positions 230-239 (GAGGNRRGDR) are enriched in gly residues.

This sequence belongs to the universal ribosomal protein uS3 family. As to quaternary structure, part of the 30S ribosomal subunit. Forms a tight complex with proteins S10 and S14.

Functionally, binds the lower part of the 30S subunit head. Binds mRNA in the 70S ribosome, positioning it for translation. This chain is Small ribosomal subunit protein uS3, found in Ruegeria sp. (strain TM1040) (Silicibacter sp.).